An 807-amino-acid polypeptide reads, in one-letter code: G-type lectin S-receptor-like serine/threonine-protein kinase At1g61420 (807 aa).

The first 24 residues, 1-24 (MGKKWIVFFAYLLLSSFFISSSSA), serve as a signal peptide directing secretion. The Bulb-type lectin domain occupies 25-144 (GITKESPLPI…FSGRTLWQSF (120 aa)). The Extracellular segment spans residues 25–426 (GITKESPLPI…ELGGNKRKKA (402 aa)). Residues Asn-53, Asn-94, Asn-117, Asn-134, Asn-236, and Asn-267 are each glycosylated (N-linked (GlcNAc...) asparagine). Residues 278-314 (PEHSCDYYGVCGPFGLCVKSVPPKCTCFKGFVPKLIE) form the EGF-like; atypical domain. 2 disulfides stabilise this stretch: Cys-282-Cys-294 and Cys-288-Cys-302. Asn-320, Asn-336, and Asn-375 each carry an N-linked (GlcNAc...) asparagine glycan. The region spanning 333-413 (CQGNSTGKYA…EGGELLSIRL (81 aa)) is the PAN domain. Cystine bridges form between Cys-368-Cys-389 and Cys-372-Cys-378. A helical transmembrane segment spans residues 427 to 447 (ITASIVSLSLVVIIAFVAFCF). Residues 448-807 (WRYRVKHNAD…EMTKSVILGR (360 aa)) lie on the Cytoplasmic side of the membrane. In terms of domain architecture, Protein kinase spans 494-779 (FSISNKLGQG…DLPPPEQPTF (286 aa)). Residues 500–508 (LGQGGFGPV) and Lys-522 contribute to the ATP site. Ser-528 and Ser-543 each carry phosphoserine. The interval 583 to 600 (RKRLEIDWPKRLDIIQGI) is caM-binding. Asp-619 (proton acceptor) is an active-site residue. Phosphoserine occurs at positions 623 and 636. Thr-653 carries the post-translational modification Phosphothreonine. Phosphoserine occurs at positions 696 and 790.

It belongs to the protein kinase superfamily. Ser/Thr protein kinase family.

The protein resides in the cell membrane. The enzyme catalyses L-seryl-[protein] + ATP = O-phospho-L-seryl-[protein] + ADP + H(+). The catalysed reaction is L-threonyl-[protein] + ATP = O-phospho-L-threonyl-[protein] + ADP + H(+). This chain is G-type lectin S-receptor-like serine/threonine-protein kinase At1g61420, found in Arabidopsis thaliana (Mouse-ear cress).